The following is a 574-amino-acid chain: Glycine--tRNA ligase (574 aa).

Residues arginine 96 and glutamate 162 each coordinate substrate. ATP contacts are provided by residues 194–196 (RNE), 204–209 (IRLREF), 327–328 (EC), and 450–453 (GIDR). 209–213 (FTQAE) is a substrate binding site. 446–450 (EPSYG) serves as a coordination point for substrate.

Belongs to the class-II aminoacyl-tRNA synthetase family.

It localises to the cytoplasm. It catalyses the reaction tRNA(Gly) + glycine + ATP = glycyl-tRNA(Gly) + AMP + diphosphate. In terms of biological role, catalyzes the attachment of glycine to tRNA(Gly). In Methanococcus maripaludis (strain C7 / ATCC BAA-1331), this protein is Glycine--tRNA ligase.